We begin with the raw amino-acid sequence, 477 residues long: MSPQTETKASVGFKAGVKEYKLTYYTPEYQTKDTDILAAFRVTPQPGVPPEEAGAAVAAESSTGTWTTVWTDGLTSLDRYKGRCYRIERVVGEKDQYIAYVAYPLDLFEEGSVTNMFTSIVGNVFGFKALRALRLEDLRIPPAYVKTFQGPPHGIQVERDKLNKYGRPLLGCTIKPKLGLSAKNYGRAVYECLRGGLDFTKDDENVNSQPFMRWRDRFLFCAEALYKAQAETGEIKGHYLNATAGTCEEMIKRAVFARELGVPIVMHDYLTGGFTANTSLAHYCRDNGLLLHIHRAMHAVIDRQKNHGIHFRVLAKALRMSGGDHIHSGTVVGKLEGERDITLGFVDLLRDDFVEQDRSRGIYFTQDWVSLPGVLPVASGGIHVWHMPALTEIFGDDSVLQFGGGTLGHPWGNAPGAVANRVALEACVKARNEGRDLAQEGNEIIREACKWSPELAAACEVWKEIVFNFAAVDVLDK.

Residues 1 to 2 (MS) constitute a propeptide that is removed on maturation. P3 is subject to N-acetylproline. K14 bears the N6,N6,N6-trimethyllysine mark. Residues N123 and T173 each contribute to the substrate site. Residue K175 is the Proton acceptor of the active site. K177 contacts substrate. The Mg(2+) site is built by K201, D203, and E204. Residue K201 is modified to N6-carboxylysine. The active-site Proton acceptor is the H294. Substrate contacts are provided by R295, H327, and S379.

The protein belongs to the RuBisCO large chain family. Type I subfamily. In terms of assembly, heterohexadecamer of 8 large chains and 8 small chains; disulfide-linked. The disulfide link is formed within the large subunit homodimers. Requires Mg(2+) as cofactor. Post-translationally, the disulfide bond which can form in the large chain dimeric partners within the hexadecamer appears to be associated with oxidative stress and protein turnover.

It localises to the plastid. The protein resides in the chloroplast. It catalyses the reaction 2 (2R)-3-phosphoglycerate + 2 H(+) = D-ribulose 1,5-bisphosphate + CO2 + H2O. It carries out the reaction D-ribulose 1,5-bisphosphate + O2 = 2-phosphoglycolate + (2R)-3-phosphoglycerate + 2 H(+). Its function is as follows. RuBisCO catalyzes two reactions: the carboxylation of D-ribulose 1,5-bisphosphate, the primary event in carbon dioxide fixation, as well as the oxidative fragmentation of the pentose substrate in the photorespiration process. Both reactions occur simultaneously and in competition at the same active site. In Nicotiana sylvestris (Wood tobacco), this protein is Ribulose bisphosphate carboxylase large chain.